We begin with the raw amino-acid sequence, 173 residues long: Disulfide bond formation protein B (173 aa).

Over 1 to 11 the chain is Cytoplasmic; that stretch reads MNALQWSFRAQ. Residues 12–28 traverse the membrane as a helical segment; it reads CLTGFLFCTGLLAYAIF. The Periplasmic portion of the chain corresponds to 29-46; sequence LQLHQGLEPCPLCIFQRI. The cysteines at positions 38 and 41 are disulfide-linked. A helical transmembrane segment spans residues 47-63; the sequence is AFAVLGILFLIAGLYNS. Residues 64 to 70 are Cytoplasmic-facing; sequence SNVYTRK. A helical transmembrane segment spans residues 71 to 88; that stretch reads AYGLLIFLTAAIGTGIAG. The Periplasmic portion of the chain corresponds to 89 to 145; that stretch reads RHVWVQLMPHNTISSCGSPLSFLSETMGPFEVFRTVLTGTSDCGNIDWRFLGLSMPM. C104 and C131 form a disulfide bridge. A helical membrane pass occupies residues 146-164; sequence WSMFWFVALALLGLLVGFK. The Cytoplasmic segment spans residues 165–173; it reads AERRKPLFS.

The protein belongs to the DsbB family.

The protein resides in the cell inner membrane. Required for disulfide bond formation in some periplasmic proteins. Acts by oxidizing the DsbA protein. The polypeptide is Disulfide bond formation protein B (Xylella fastidiosa (strain 9a5c)).